A 119-amino-acid chain; its full sequence is Large ribosomal subunit protein uL18 (119 aa).

Belongs to the universal ribosomal protein uL18 family. In terms of assembly, part of the 50S ribosomal subunit; part of the 5S rRNA/L5/L18/L25 subcomplex. Contacts the 5S and 23S rRNAs.

This is one of the proteins that bind and probably mediate the attachment of the 5S RNA into the large ribosomal subunit, where it forms part of the central protuberance. The sequence is that of Large ribosomal subunit protein uL18 from Chlorobaculum tepidum (strain ATCC 49652 / DSM 12025 / NBRC 103806 / TLS) (Chlorobium tepidum).